Consider the following 130-residue polypeptide: Glycine cleavage system H protein (130 aa).

The Lipoyl-binding domain occupies 25 to 106 (TALIGISDFA…PFDSWMIKVK (82 aa)). K66 carries the post-translational modification N6-lipoyllysine.

Belongs to the GcvH family. In terms of assembly, the glycine cleavage system is composed of four proteins: P, T, L and H. (R)-lipoate is required as a cofactor.

Functionally, the glycine cleavage system catalyzes the degradation of glycine. The H protein shuttles the methylamine group of glycine from the P protein to the T protein. The polypeptide is Glycine cleavage system H protein (Leptospira borgpetersenii serovar Hardjo-bovis (strain JB197)).